The sequence spans 450 residues: Oxygen-independent coproporphyrinogen III oxidase (450 aa).

The 235-residue stretch at 42 to 276 folds into the Radical SAM core domain; it reads LPAGASASLY…CAIANALKEA (235 aa). S-adenosyl-L-methionine is bound at residue Tyr51. [4Fe-4S] cluster-binding residues include Cys57 and Cys61. Tyr63 is a binding site for S-adenosyl-L-methionine. Cys64 is a binding site for [4Fe-4S] cluster. S-adenosyl-L-methionine contacts are provided by residues Gly108, 109-110, Glu141, Gln168, Arg180, Asp205, Ala239, and Ile325; that span reads GT.

The protein belongs to the anaerobic coproporphyrinogen-III oxidase family. Monomer. It depends on [4Fe-4S] cluster as a cofactor.

The protein resides in the cytoplasm. It carries out the reaction coproporphyrinogen III + 2 S-adenosyl-L-methionine = protoporphyrinogen IX + 2 5'-deoxyadenosine + 2 L-methionine + 2 CO2. The protein operates within porphyrin-containing compound metabolism; protoporphyrin-IX biosynthesis; protoporphyrinogen-IX from coproporphyrinogen-III (AdoMet route): step 1/1. Involved in the heme biosynthesis. Catalyzes the anaerobic oxidative decarboxylation of propionate groups of rings A and B of coproporphyrinogen III to yield the vinyl groups in protoporphyrinogen IX. In Bradyrhizobium diazoefficiens (strain JCM 10833 / BCRC 13528 / IAM 13628 / NBRC 14792 / USDA 110), this protein is Oxygen-independent coproporphyrinogen III oxidase (hemN).